We begin with the raw amino-acid sequence, 261 residues long: uncharacterized protein (261 aa).

This is an uncharacterized protein from Methanocaldococcus jannaschii (strain ATCC 43067 / DSM 2661 / JAL-1 / JCM 10045 / NBRC 100440) (Methanococcus jannaschii).